The following is a 443-amino-acid chain: MQSVTPPPTQQGKPDPTNSDMMMKRFQEDMVGILDGRSRAHFDDLANYFHSKIRICTCFEPGRSLSVPEFQHVLTFISGYYQHLTEVRSDRWTDHPNYINGIFTYTAMGSDRKNSDGKWTYEASMDWNQNKFLIEYIWFPYNCSVFPVKDPSEPLEDVDNYLERVRTKLSSGLFLPDGVDQTLQNFEEFGDWITDDAIIVVCDEQKMDKNEFIKYMSTRYHHIRKYSNNQFDHVKNNQDFEITFSTTWTADNTTQFRDTYIFRVKKAEDYFPENDRLYLLWKIYWVTKRCTVDVTQYPAVLDGSVILGEVNKRFCGMIDGENWDVYQSFLDLFDPNDTKWGSCVGKREQKYDKIREYMNKVVARYAKCVVSEVRIRNLVHADFSTTFLLSRANEIQEQEELDVGFVGYKNKNGHWKINRMYFECEESKKRKFMDNLLNVRLKC.

The tract at residues 1 to 21 (MQSVTPPPTQQGKPDPTNSDM) is disordered. Polar residues predominate over residues 10–20 (QQGKPDPTNSD).

This is an uncharacterized protein from Caenorhabditis elegans.